The following is a 209-amino-acid chain: MDGVTVIDHPLVQHKLTIMRRKETSTGSFRRLLREISTLLCYEVTRDLELTMETIETPLQTMESPILEGKKLVFASILRAGNGLLEGMLDLVPSARVSHIGVYRDHETLQPVEYYFKAPEDVAERLIIVVDPMLATGNSSIAAIDKLKERGAHNIRFLCLLAAPEGIQNFRAAHPDVPVFTASIDSHLNEKGYIVPGLGDAGDRMYGTK.

5-phospho-alpha-D-ribose 1-diphosphate-binding positions include Arg79, Arg104, and 131–139 (DPMLATGNS). Uracil is bound by residues Ile194 and 199–201 (GDA). Asp200 is a 5-phospho-alpha-D-ribose 1-diphosphate binding site.

This sequence belongs to the UPRTase family. Mg(2+) serves as cofactor.

The enzyme catalyses UMP + diphosphate = 5-phospho-alpha-D-ribose 1-diphosphate + uracil. The protein operates within pyrimidine metabolism; UMP biosynthesis via salvage pathway; UMP from uracil: step 1/1. Allosterically activated by GTP. In terms of biological role, catalyzes the conversion of uracil and 5-phospho-alpha-D-ribose 1-diphosphate (PRPP) to UMP and diphosphate. The sequence is that of Uracil phosphoribosyltransferase from Rhizobium leguminosarum bv. trifolii (strain WSM2304).